Here is a 442-residue protein sequence, read N- to C-terminus: Probable xylan O-acetyltransferase 8 (442 aa).

Over 1–13 the chain is Cytoplasmic; the sequence is MVQLPAMKRVKGR. The chain crosses the membrane as a helical; Signal-anchor for type II membrane protein span at residues 14-34; it reads APLSVVVAIIGGLALAGIIFT. Residues 35-442 lie on the Lumenal side of the membrane; that stretch reads EDLRGLTEVK…TWNRLLYAHL (408 aa). An N-linked (GlcNAc...) asparagine glycan is attached at asparagine 96. Intrachain disulfides connect cysteine 100-cysteine 151, cysteine 122-cysteine 187, cysteine 131-cysteine 426, and cysteine 344-cysteine 422. A GDS motif motif is present at residues 174-176; sequence GDS. The Nucleophile role is filled by serine 176. 3 N-linked (GlcNAc...) asparagine glycosylation sites follow: asparagine 217, asparagine 346, and asparagine 384. The active-site Proton donor is aspartate 421. The DXXH motif motif lies at 421–424; it reads DCIH. Residue histidine 424 is the Proton acceptor of the active site.

This sequence belongs to the PC-esterase family. TBL subfamily.

The protein resides in the golgi apparatus membrane. Probable xylan acetyltransferase required for 2-O- and 3-O-monoacetylation of xylosyl residues in xylan. Possesses extremely low activity in vitro. This chain is Probable xylan O-acetyltransferase 8, found in Oryza sativa subsp. japonica (Rice).